The primary structure comprises 366 residues: Cobalt-precorrin-5B C(1)-methyltransferase (366 aa).

It belongs to the CbiD family.

It carries out the reaction Co-precorrin-5B + S-adenosyl-L-methionine = Co-precorrin-6A + S-adenosyl-L-homocysteine. It participates in cofactor biosynthesis; adenosylcobalamin biosynthesis; cob(II)yrinate a,c-diamide from sirohydrochlorin (anaerobic route): step 6/10. Functionally, catalyzes the methylation of C-1 in cobalt-precorrin-5B to form cobalt-precorrin-6A. The protein is Cobalt-precorrin-5B C(1)-methyltransferase of Thermoanaerobacter sp. (strain X514).